Consider the following 229-residue polypeptide: uncharacterized protein (229 aa).

The protein to M.pneumoniae MPN_376 central region.

This is an uncharacterized protein from Mycoplasma pneumoniae (strain ATCC 29342 / M129 / Subtype 1) (Mycoplasmoides pneumoniae).